We begin with the raw amino-acid sequence, 462 residues long: L-seryl-tRNA(Sec) selenium transferase (462 aa).

Lysine 292 bears the N6-(pyridoxal phosphate)lysine mark.

The protein belongs to the SelA family. Pyridoxal 5'-phosphate serves as cofactor.

It is found in the cytoplasm. It carries out the reaction L-seryl-tRNA(Sec) + selenophosphate + H(+) = L-selenocysteinyl-tRNA(Sec) + phosphate. The protein operates within aminoacyl-tRNA biosynthesis; selenocysteinyl-tRNA(Sec) biosynthesis; selenocysteinyl-tRNA(Sec) from L-seryl-tRNA(Sec) (bacterial route): step 1/1. Its function is as follows. Converts seryl-tRNA(Sec) to selenocysteinyl-tRNA(Sec) required for selenoprotein biosynthesis. The protein is L-seryl-tRNA(Sec) selenium transferase of Geotalea daltonii (strain DSM 22248 / JCM 15807 / FRC-32) (Geobacter daltonii).